Here is an 87-residue protein sequence, read N- to C-terminus: MANIKSAIKRIDVTKLETARNKSKKSAIKTFIKKFEAAIEKNDKEDATKLFNLATKKIDQAASKNTISKNSAAKKISRMAKELNKLA.

It belongs to the bacterial ribosomal protein bS20 family.

Binds directly to 16S ribosomal RNA. The polypeptide is Small ribosomal subunit protein bS20 (Finegoldia magna (strain ATCC 29328 / DSM 20472 / WAL 2508) (Peptostreptococcus magnus)).